The following is a 284-amino-acid chain: 2-dehydro-3-deoxyphosphooctonate aldolase (284 aa).

This sequence belongs to the KdsA family.

It is found in the cytoplasm. It catalyses the reaction D-arabinose 5-phosphate + phosphoenolpyruvate + H2O = 3-deoxy-alpha-D-manno-2-octulosonate-8-phosphate + phosphate. Its pathway is carbohydrate biosynthesis; 3-deoxy-D-manno-octulosonate biosynthesis; 3-deoxy-D-manno-octulosonate from D-ribulose 5-phosphate: step 2/3. It functions in the pathway bacterial outer membrane biogenesis; lipopolysaccharide biosynthesis. The protein is 2-dehydro-3-deoxyphosphooctonate aldolase of Salmonella arizonae (strain ATCC BAA-731 / CDC346-86 / RSK2980).